Reading from the N-terminus, the 485-residue chain is NADH-quinone oxidoreductase subunit N (485 aa).

14 consecutive transmembrane segments (helical) span residues 8–28 (LIAL…MLSI), 35–55 (FLNA…LWFV), 71–91 (GFAM…CTFA), 105–125 (FYLL…ANHL), 127–147 (ALFL…GYAF), 159–179 (YTIL…LVYA), 203–223 (LLAG…LVPF), 235–255 (PAPV…GVVM), 271–291 (VVLG…ALSQ), 297–317 (LLGY…IALQ), 326–346 (VGVY…VVSL), 373–393 (AAVM…LGFI), 408–430 (WWLV…RVAV), and 455–475 (IVVL…QPLI).

It belongs to the complex I subunit 2 family. In terms of assembly, NDH-1 is composed of 13 different subunits. Subunits NuoA, H, J, K, L, M, N constitute the membrane sector of the complex.

Its subcellular location is the cell inner membrane. The enzyme catalyses a quinone + NADH + 5 H(+)(in) = a quinol + NAD(+) + 4 H(+)(out). Its function is as follows. NDH-1 shuttles electrons from NADH, via FMN and iron-sulfur (Fe-S) centers, to quinones in the respiratory chain. The immediate electron acceptor for the enzyme in this species is believed to be ubiquinone. Couples the redox reaction to proton translocation (for every two electrons transferred, four hydrogen ions are translocated across the cytoplasmic membrane), and thus conserves the redox energy in a proton gradient. The chain is NADH-quinone oxidoreductase subunit N from Salmonella dublin (strain CT_02021853).